Here is a 267-residue protein sequence, read N- to C-terminus: Putative transcription factor Ovo-like 1 (267 aa).

4 C2H2-type zinc fingers span residues phenylalanine 118 to histidine 140, histidine 146 to histidine 168, tyrosine 174 to histidine 197, and tyrosine 213 to histidine 235.

In terms of tissue distribution, expressed in fetal kidney, and also in adult pancreas and placenta. Not expressed in intestine, peripheral blood lymphocytes and ovary.

It is found in the nucleus. Its function is as follows. Putative transcription factor. Involved in hair formation and spermatogenesis. May function in the differentiation and/or maintenance of the urogenital system. This is Putative transcription factor Ovo-like 1 (OVOL1) from Homo sapiens (Human).